The chain runs to 483 residues: Trehalose-6-phosphate synthase (483 aa).

Residue arginine 22 participates in D-glucose 6-phosphate binding. 42–43 (GG) is a UDP-alpha-D-glucose binding site. D-glucose 6-phosphate-binding residues include tyrosine 94 and aspartate 148. 2 residues coordinate UDP-alpha-D-glucose: arginine 290 and lysine 295. Arginine 328 lines the D-glucose 6-phosphate pocket. Position 393–397 (393–397 (LVAKE)) interacts with UDP-alpha-D-glucose.

This sequence belongs to the glycosyltransferase 20 family. Homotetramer.

The catalysed reaction is ADP-alpha-D-glucose + D-glucose 6-phosphate = alpha,alpha-trehalose 6-phosphate + ADP + H(+). It carries out the reaction CDP-alpha-D-glucose + D-glucose 6-phosphate = alpha,alpha-trehalose 6-phosphate + CDP + H(+). The enzyme catalyses GDP-alpha-D-glucose + D-glucose 6-phosphate = alpha,alpha-trehalose 6-phosphate + GDP + H(+). It catalyses the reaction TDP-alpha-D-glucose + D-glucose 6-phosphate = 5-methyl-UDP + alpha,alpha-trehalose 6-phosphate + H(+). The catalysed reaction is D-glucose 6-phosphate + UDP-alpha-D-glucose = alpha,alpha-trehalose 6-phosphate + UDP + H(+). Its pathway is glycan biosynthesis; trehalose biosynthesis. In terms of biological role, probably involved in the osmoprotection via the biosynthesis of trehalose and in the production of glycogen and alpha-glucan via the TreS-Pep2 branch involved in the biosynthesis of maltose-1-phosphate (M1P). Catalyzes the transfer of glucose from UDP-glucose (UDP-Glc) to D-glucose 6-phosphate (Glc-6-P) to form trehalose-6-phosphate. Probably also able to use ADP-Glc, CDP-Glc, GDP-Glc and TDP-Glc as glucosyl donors. The protein is Trehalose-6-phosphate synthase of Mycobacterium sp. (strain JLS).